Here is a 678-residue protein sequence, read N- to C-terminus: Zinc finger translocation-associated protein (678 aa).

Disordered regions lie at residues 1–100, 174–250, 333–413, and 493–583; these read MEPG…PGRD, GAGG…GSRG, LSEL…RDHR, and PESP…NYQP. Residues 66–78 show a composition bias toward low complexity; the sequence is PSSRARGPASSGR. The span at 79-88 shows a compositional bias: basic and acidic residues; the sequence is KYSDHCEARA. Over residues 187–200 the composition is skewed to acidic residues; sequence AEEEEEEDEEEEEG. Positions 205-214 are enriched in low complexity; it reads ACPPKGSGKA. Lysine 375 is covalently cross-linked (Glycyl lysine isopeptide (Lys-Gly) (interchain with G-Cter in SUMO2)). Over residues 493–509 the composition is skewed to low complexity; the sequence is PESPSVPVAPSTASASE. 2 stretches are compositionally biased toward acidic residues: residues 512–524 and 539–549; these read GGAEEAEPEEEWW and AEEEDDEDDSQ. The segment covering 557–572 has biased composition (pro residues); that stretch reads PPLPLPPPPPPPPPPP. Over residues 573–583 the composition is skewed to basic and acidic residues; it reads RSREQRRNYQP.

This is Zinc finger translocation-associated protein from Mus musculus (Mouse).